The following is a 473-amino-acid chain: Mitochondrial adenyl nucleotide antiporter SLC25A24-B (473 aa).

Residues 1-173 (MLEQVQKFLL…RYWKHSTVLD (173 aa)) form a regulatory N-terminal domain region. At 1–197 (MLEQVQKFLL…EKKTGQWWKQ (197 aa)) the chain is on the mitochondrial intermembrane side. EF-hand domains are found at residues 19–54 (DSQSRYEELFHKLDVNKDGKVDILELQEGLKAMGME), 55–88 (VGKGAEEKIVAAGDTNKDGHLDFGEFIRYLEEHE), 86–121 (EHEKKMKIAFTSLDKNKDGKIESAEIMNSLKVLGIK), and 122–157 (ISLDHADKILKSMDSDGTLTVDWNEWRDHFLFNPAD). 20 residues coordinate Ca(2+): Asp-32, Asn-34, Asp-36, Lys-38, Glu-43, Asp-68, Asn-70, Asp-72, His-74, Glu-79, Asp-99, Asn-101, Asp-103, Lys-105, Glu-110, Asp-135, Asp-137, Thr-139, Thr-141, and Glu-146. The segment at 159–168 (IQQIIRYWKH) is linker region. The segment at 174 to 473 (IGDSLTIPDE…YEKMKVQLGI (300 aa)) is C-terminal transmembrane transporter domain. Solcar repeat units lie at residues 192–277 (GQWW…YKKL), 285–370 (LGTA…LKNY), and 382–470 (PGVL…MKVQ). The helical transmembrane segment at 198–215 (LMAGGMAGAVSRTGTAPL) threads the bilayer. Residues 216–251 (DRLKVMMQVHGSKGNSNIITGLKQMVKEGGIRSLWR) are Mitochondrial matrix-facing. A helical membrane pass occupies residues 252–271 (GNGVNVIKIAPETAMKFWAY). The Mitochondrial intermembrane segment spans residues 272 to 294 (EQYKKLFTSESGKLGTAERFVAG). The chain crosses the membrane as a helical span at residues 295–308 (SLAGATAQTSIYPM). Residues 309-344 (EVLKTRLAVGRTGQYSGMFDCAKKIMQKEGIRAFYK) are Mitochondrial matrix-facing. A helical membrane pass occupies residues 345 to 364 (GYIPNILGIIPYAGIDLAIY). Topologically, residues 365-387 (ETLKNYWLQNHAKDSANPGVLVL) are mitochondrial intermembrane. Residues 388–405 (LGCGTASSTCGQLASYPL) traverse the membrane as a helical segment. At 406–444 (ALIRTRMQAQASIEGAPQLNMGGLFRKIVAKEGFLGLYR) the chain is on the mitochondrial matrix side. A helical transmembrane segment spans residues 445–464 (GIGPNFLKVLPAVSISYVVY). At 465–473 (EKMKVQLGI) the chain is on the mitochondrial intermembrane side.

The protein belongs to the mitochondrial carrier (TC 2.A.29) family. In terms of assembly, monomer.

Its subcellular location is the mitochondrion inner membrane. The catalysed reaction is Mg(2+)(out) + phosphate(in) + ATP(out) = Mg(2+)(in) + phosphate(out) + ATP(in). The enzyme catalyses ADP(out) + phosphate(in) + H(+)(out) = ADP(in) + phosphate(out) + H(+)(in). It carries out the reaction AMP(out) + phosphate(in) = AMP(in) + phosphate(out). It catalyses the reaction phosphate(in) + ATP(out) + 2 H(+)(out) = phosphate(out) + ATP(in) + 2 H(+)(in). The catalysed reaction is dADP(in) + ADP(out) = dADP(out) + ADP(in). The enzyme catalyses Mg(2+)(in) + ADP(out) + ATP(in) + H(+)(out) = Mg(2+)(out) + ADP(in) + ATP(out) + H(+)(in). It carries out the reaction ADP(out) + diphosphate(in) = ADP(in) + diphosphate(out). It catalyses the reaction dAMP(in) + ADP(out) + H(+)(out) = dAMP(out) + ADP(in) + H(+)(in). The catalysed reaction is 3'-AMP(in) + ADP(out) + H(+)(out) = 3'-AMP(out) + ADP(in) + H(+)(in). The enzyme catalyses dAMP(out) + phosphate(in) = dAMP(in) + phosphate(out). It carries out the reaction 3'-AMP(out) + phosphate(in) = 3'-AMP(in) + phosphate(out). It catalyses the reaction dADP(out) + phosphate(in) + H(+)(out) = dADP(in) + phosphate(out) + H(+)(in). With respect to regulation, activated by an increase in cytosolic calcium levels that induce a conformational change of the N-terminal regulatory domain, uncapping the channel and allowing transport. Inhibited by bathophenanthroline, mersalyl, p-hydroxymercuribenzoate, bromcresol purple and tannic acid. Its function is as follows. Electroneutral antiporter that mediates the transport of adenyl nucleotides through the inner mitochondrial membrane. Originally identified as an ATP-magnesium/inorganic phosphate antiporter, it also acts as a broad specificity adenyl nucleotide antiporter. By regulating the mitochondrial matrix adenyl nucleotide pool could adapt to changing cellular energetic demands and indirectly regulate adenyl nucleotide-dependent metabolic pathways. The polypeptide is Mitochondrial adenyl nucleotide antiporter SLC25A24-B (slc25a24-b) (Xenopus laevis (African clawed frog)).